The following is a 156-amino-acid chain: 6,7-dimethyl-8-ribityllumazine synthase (156 aa).

Residues Phe23, 57-59, and 81-83 each bind 5-amino-6-(D-ribitylamino)uracil; these read AFE and AVI. A (2S)-2-hydroxy-3-oxobutyl phosphate-binding site is contributed by 86-87; sequence AT. His89 serves as the catalytic Proton donor. Asn114 provides a ligand contact to 5-amino-6-(D-ribitylamino)uracil. Position 128 (Arg128) interacts with (2S)-2-hydroxy-3-oxobutyl phosphate.

This sequence belongs to the DMRL synthase family.

It carries out the reaction (2S)-2-hydroxy-3-oxobutyl phosphate + 5-amino-6-(D-ribitylamino)uracil = 6,7-dimethyl-8-(1-D-ribityl)lumazine + phosphate + 2 H2O + H(+). The protein operates within cofactor biosynthesis; riboflavin biosynthesis; riboflavin from 2-hydroxy-3-oxobutyl phosphate and 5-amino-6-(D-ribitylamino)uracil: step 1/2. Catalyzes the formation of 6,7-dimethyl-8-ribityllumazine by condensation of 5-amino-6-(D-ribitylamino)uracil with 3,4-dihydroxy-2-butanone 4-phosphate. This is the penultimate step in the biosynthesis of riboflavin. The sequence is that of 6,7-dimethyl-8-ribityllumazine synthase from Aliarcobacter butzleri (strain RM4018) (Arcobacter butzleri).